We begin with the raw amino-acid sequence, 393 residues long: Protein TsgA (393 aa).

12 consecutive transmembrane segments (helical) span residues 11–31 (WISF…GMVM), 51–71 (FLNA…EIIP), 78–98 (FGFI…SLAL), 101–121 (AAMF…TFLI), 134–154 (LLFT…VAAF), 162–182 (WYWV…LTFG), 206–226 (IGVL…LGFI), 245–265 (ALVS…SFIL), 273–293 (ILTV…TGTQ), 298–318 (WFIL…ITLG), 332–352 (FILT…GPIV), and 361–381 (LLTA…LGFV).

The protein belongs to the major facilitator superfamily. TsgA family.

The protein resides in the cell inner membrane. The sequence is that of Protein TsgA from Salmonella agona (strain SL483).